The primary structure comprises 226 residues: Putative ABC transporter ATP-binding protein BQ02700 (226 aa).

The region spanning 4–225 (IKFDKVTQVF…VAIKEYIRRM (222 aa)) is the ABC transporter domain. 35–42 (GANGSGKS) provides a ligand contact to ATP.

Belongs to the ABC transporter superfamily.

The protein resides in the cell inner membrane. In terms of biological role, probably part of an ABC transporter complex. Responsible for energy coupling to the transport system. This is Putative ABC transporter ATP-binding protein BQ02700 from Bartonella quintana (strain Toulouse) (Rochalimaea quintana).